We begin with the raw amino-acid sequence, 268 residues long: Putative type I specificity subunit S.MpnORF365P (268 aa).

The protein belongs to the type-I restriction system S methylase family. As to quaternary structure, the methyltransferase is composed of M and S polypeptides.

The specificity (S) subunit of a type I methyltransferase (MTase); this subunit dictates DNA sequence specificity. The single R subunit has multiple frameshifts and is probably not expressed. This Mycoplasma pneumoniae (strain ATCC 29342 / M129 / Subtype 1) (Mycoplasmoides pneumoniae) protein is Putative type I specificity subunit S.MpnORF365P.